Reading from the N-terminus, the 103-residue chain is Large ribosomal subunit protein bL21 (103 aa).

Belongs to the bacterial ribosomal protein bL21 family. Part of the 50S ribosomal subunit. Contacts protein L20.

In terms of biological role, this protein binds to 23S rRNA in the presence of protein L20. The polypeptide is Large ribosomal subunit protein bL21 (Polaromonas sp. (strain JS666 / ATCC BAA-500)).